Consider the following 472-residue polypeptide: Ribosomal protein uS12 methylthiotransferase RimO (472 aa).

The MTTase N-terminal domain occupies 33–143 (NRIGFVSLGC…VLKHVHKYVP (111 aa)). Positions 42, 78, 107, 175, 179, and 182 each coordinate [4Fe-4S] cluster. Positions 161-398 (LTPKHYAYLK…MELQAEISAE (238 aa)) constitute a Radical SAM core domain. Positions 401–467 (ARFVGRTLDI…EHDLWAEVVD (67 aa)) constitute a TRAM domain.

The protein belongs to the methylthiotransferase family. RimO subfamily. It depends on [4Fe-4S] cluster as a cofactor.

Its subcellular location is the cytoplasm. It carries out the reaction L-aspartate(89)-[ribosomal protein uS12]-hydrogen + (sulfur carrier)-SH + AH2 + 2 S-adenosyl-L-methionine = 3-methylsulfanyl-L-aspartate(89)-[ribosomal protein uS12]-hydrogen + (sulfur carrier)-H + 5'-deoxyadenosine + L-methionine + A + S-adenosyl-L-homocysteine + 2 H(+). Its function is as follows. Catalyzes the methylthiolation of an aspartic acid residue of ribosomal protein uS12. The chain is Ribosomal protein uS12 methylthiotransferase RimO from Shewanella sp. (strain W3-18-1).